Reading from the N-terminus, the 329-residue chain is DNA-directed RNA polymerase subunit alpha (329 aa).

Positions Met1–Lys232 are alpha N-terminal domain (alpha-NTD). The alpha C-terminal domain (alpha-CTD) stretch occupies residues Phe246 to Ala329.

Belongs to the RNA polymerase alpha chain family. In terms of assembly, homodimer. The RNAP catalytic core consists of 2 alpha, 1 beta, 1 beta' and 1 omega subunit. When a sigma factor is associated with the core the holoenzyme is formed, which can initiate transcription.

The catalysed reaction is RNA(n) + a ribonucleoside 5'-triphosphate = RNA(n+1) + diphosphate. DNA-dependent RNA polymerase catalyzes the transcription of DNA into RNA using the four ribonucleoside triphosphates as substrates. The polypeptide is DNA-directed RNA polymerase subunit alpha (Hydrogenovibrio crunogenus (strain DSM 25203 / XCL-2) (Thiomicrospira crunogena)).